Reading from the N-terminus, the 286-residue chain is Shikimate dehydrogenase (NADP(+)) (286 aa).

Residues 22–24 (SLS) and Thr-69 contribute to the shikimate site. Lys-73 acts as the Proton acceptor in catalysis. NADP(+) is bound at residue Glu-85. Shikimate-binding residues include Asn-94 and Asp-109. NADP(+) contacts are provided by residues 133-137 (GAGGA) and Val-231. Tyr-233 is a binding site for shikimate. Gly-254 lines the NADP(+) pocket.

This sequence belongs to the shikimate dehydrogenase family. In terms of assembly, homodimer.

It carries out the reaction shikimate + NADP(+) = 3-dehydroshikimate + NADPH + H(+). The protein operates within metabolic intermediate biosynthesis; chorismate biosynthesis; chorismate from D-erythrose 4-phosphate and phosphoenolpyruvate: step 4/7. Functionally, involved in the biosynthesis of the chorismate, which leads to the biosynthesis of aromatic amino acids. Catalyzes the reversible NADPH linked reduction of 3-dehydroshikimate (DHSA) to yield shikimate (SA). In Alkaliphilus metalliredigens (strain QYMF), this protein is Shikimate dehydrogenase (NADP(+)).